The sequence spans 59 residues: Protein translocase subunit SecE (59 aa).

Residues 33–53 (GAGIALVGLLGFIIFAVMTFV) form a helical membrane-spanning segment.

It belongs to the SecE/SEC61-gamma family. Component of the Sec protein translocase complex. Heterotrimer consisting of SecY (alpha), SecG (beta) and SecE (gamma) subunits. The heterotrimers can form oligomers, although 1 heterotrimer is thought to be able to translocate proteins. Interacts with the ribosome. May interact with SecDF, and other proteins may be involved.

Its subcellular location is the cell membrane. Essential subunit of the Sec protein translocation channel SecYEG. Clamps together the 2 halves of SecY. May contact the channel plug during translocation. In Haloarcula marismortui (strain ATCC 43049 / DSM 3752 / JCM 8966 / VKM B-1809) (Halobacterium marismortui), this protein is Protein translocase subunit SecE.